The chain runs to 357 residues: Protein NDRG2 (357 aa).

A compositionally biased stretch (basic and acidic residues) spans 1-14; that stretch reads MAELREVQITEEKP. The disordered stretch occupies residues 1 to 26; it reads MAELREVQITEEKPLLPGQTPEVAKT. The residue at position 2 (A2) is an N-acetylalanine. The residue at position 20 (T20) is a Phosphothreonine. S312 and S314 each carry phosphoserine. Residue T316 is modified to Phosphothreonine. The residue at position 318 (S318) is a Phosphoserine. A Phosphothreonine modification is found at T320. A disordered region spans residues 320-357; that stretch reads TSAASIDGNRSRSRTLSQSSESGTLSSGPPGHTMEVSC. Phosphoserine occurs at positions 321, 324, and 330. The span at 333–347 shows a compositional bias: low complexity; sequence RTLSQSSESGTLSSG. T334 bears the Phosphothreonine mark. Phosphoserine is present on residues S336, S338, S339, and S341. T343 carries the phosphothreonine modification. S356 is modified (phosphoserine).

It belongs to the NDRG family. Interacts with CTNNB1.

The protein resides in the cytoplasm. It localises to the perinuclear region. The protein localises to the cell projection. Its subcellular location is the growth cone. Contributes to the regulation of the Wnt signaling pathway. Down-regulates CTNNB1-mediated transcriptional activation of target genes, such as CCND1, and may thereby act as tumor suppressor. May be involved in dendritic cell and neuron differentiation. This is Protein NDRG2 (NDRG2) from Bos taurus (Bovine).